A 385-amino-acid chain; its full sequence is ATP phosphoribosyltransferase regulatory subunit (385 aa).

It belongs to the class-II aminoacyl-tRNA synthetase family. HisZ subfamily. In terms of assembly, heteromultimer composed of HisG and HisZ subunits.

It is found in the cytoplasm. It participates in amino-acid biosynthesis; L-histidine biosynthesis; L-histidine from 5-phospho-alpha-D-ribose 1-diphosphate: step 1/9. In terms of biological role, required for the first step of histidine biosynthesis. May allow the feedback regulation of ATP phosphoribosyltransferase activity by histidine. This is ATP phosphoribosyltransferase regulatory subunit from Bordetella petrii (strain ATCC BAA-461 / DSM 12804 / CCUG 43448).